The primary structure comprises 172 residues: MFSRATRSLVMKTGGLRTQGTHSPGSAASSSQRRMTPYVDCYAQRSYPMPDEPYCTELSEEQRALKEKEKGSWAQLSQAEKVALYRLQFHETFAEMNHRSNEWKTVMGCVFFFIGFTALVIWWQRVYVFPKKVVTLTEERKAQQLQRLLDMKSNPIQGLSAHWDYEKKEWKK.

Residues 1–18 (MFSRATRSLVMKTGGLRT) constitute a mitochondrion transit peptide. The interval 1 to 33 (MFSRATRSLVMKTGGLRTQGTHSPGSAASSSQR) is disordered. Over residues 16–33 (LRTQGTHSPGSAASSSQR) the composition is skewed to polar residues. Topologically, residues 19–101 (QGTHSPGSAA…TFAEMNHRSN (83 aa)) are mitochondrial matrix. A helical membrane pass occupies residues 102–127 (EWKTVMGCVFFFIGFTALVIWWQRVY). At 128 to 172 (VFPKKVVTLTEERKAQQLQRLLDMKSNPIQGLSAHWDYEKKEWKK) the chain is on the mitochondrial intermembrane side.

It belongs to the cytochrome c oxidase IV family. As to quaternary structure, component of the cytochrome c oxidase (complex IV, CIV), a multisubunit enzyme composed of 14 subunits. The complex is composed of a catalytic core of 3 subunits MT-CO1, MT-CO2 and MT-CO3, encoded in the mitochondrial DNA, and 11 supernumerary subunits COX4I, COX5A, COX5B, COX6A, COX6B, COX6C, COX7A, COX7B, COX7C, COX8 and NDUFA4, which are encoded in the nuclear genome. The complex exists as a monomer or a dimer and forms supercomplexes (SCs) in the inner mitochondrial membrane with NADH-ubiquinone oxidoreductase (complex I, CI) and ubiquinol-cytochrome c oxidoreductase (cytochrome b-c1 complex, complex III, CIII), resulting in different assemblies (supercomplex SCI(1)III(2)IV(1) and megacomplex MCI(2)III(2)IV(2)). In terms of tissue distribution, highly expressed in lung.

The protein resides in the mitochondrion inner membrane. It functions in the pathway energy metabolism; oxidative phosphorylation. In terms of biological role, component of the cytochrome c oxidase, the last enzyme in the mitochondrial electron transport chain which drives oxidative phosphorylation. The respiratory chain contains 3 multisubunit complexes succinate dehydrogenase (complex II, CII), ubiquinol-cytochrome c oxidoreductase (cytochrome b-c1 complex, complex III, CIII) and cytochrome c oxidase (complex IV, CIV), that cooperate to transfer electrons derived from NADH and succinate to molecular oxygen, creating an electrochemical gradient over the inner membrane that drives transmembrane transport and the ATP synthase. Cytochrome c oxidase is the component of the respiratory chain that catalyzes the reduction of oxygen to water. Electrons originating from reduced cytochrome c in the intermembrane space (IMS) are transferred via the dinuclear copper A center (CU(A)) of subunit 2 and heme A of subunit 1 to the active site in subunit 1, a binuclear center (BNC) formed by heme A3 and copper B (CU(B)). The BNC reduces molecular oxygen to 2 water molecules using 4 electrons from cytochrome c in the IMS and 4 protons from the mitochondrial matrix. The protein is Cytochrome c oxidase subunit 4 isoform 2, mitochondrial (Cox4i2) of Rattus norvegicus (Rat).